We begin with the raw amino-acid sequence, 400 residues long: MTQFASPVLHSLLDTDAYKLHMQQAVFHHYYDVQVAAEFRCRDDDLLGIYADAIREQVDAMQHLRLQEDEFQWLSGLPFFKPDYLNWLREFRYNPAQVCVTNDNGKLNIRLTGPWREVIMWEVPLLAVISELVHHYRSPNAGVDQALDALESKLVDFTALTANLDMSRFHLMDFGTRRRFSREVQQAIVKRLQQESWFVGTSNYDLARRLALTPMGTQAHEWFQAHQQISPDLATSQRAALAAWLNEYPDQLGIALTDCITMDAFLRDFGIEFASRYQGLRHDSGDPVAWGEKAIAHYEKLGIDPLTKTLVFSDNLDLPKAVELYRHFASRVQLSFGIGTRLTCDIPQVKPLNIVIKLVECNGKPVAKLSDSPGKTICHDKAFVRALRKAFDLPQVRKAS.

H220 bears the Phosphohistidine; by autocatalysis mark.

Belongs to the NAPRTase family. In terms of processing, transiently phosphorylated on a His residue during the reaction cycle. Phosphorylation strongly increases the affinity for substrates and increases the rate of nicotinate D-ribonucleotide production. Dephosphorylation regenerates the low-affinity form of the enzyme, leading to product release.

It carries out the reaction nicotinate + 5-phospho-alpha-D-ribose 1-diphosphate + ATP + H2O = nicotinate beta-D-ribonucleotide + ADP + phosphate + diphosphate. It functions in the pathway cofactor biosynthesis; NAD(+) biosynthesis; nicotinate D-ribonucleotide from nicotinate: step 1/1. Functionally, catalyzes the synthesis of beta-nicotinate D-ribonucleotide from nicotinate and 5-phospho-D-ribose 1-phosphate at the expense of ATP. The polypeptide is Nicotinate phosphoribosyltransferase (Salmonella choleraesuis (strain SC-B67)).